The primary structure comprises 294 residues: Probable 2-(5''-triphosphoribosyl)-3'-dephosphocoenzyme-A synthase (294 aa).

This sequence belongs to the CitG/MdcB family.

It carries out the reaction 3'-dephospho-CoA + ATP = 2'-(5''-triphospho-alpha-D-ribosyl)-3'-dephospho-CoA + adenine. The protein is Probable 2-(5''-triphosphoribosyl)-3'-dephosphocoenzyme-A synthase of Streptococcus pyogenes serotype M3 (strain ATCC BAA-595 / MGAS315).